We begin with the raw amino-acid sequence, 706 residues long: Protein psiG (706 aa).

The N-terminal stretch at 1-23 (MKIILTLLIILFSLNKNLNFVSS) is a signal peptide. At 24 to 644 (EVTKSRICSI…FVCKPAAIIS (621 aa)) the chain is on the extracellular side. N-linked (GlcNAc...) asparagine glycosylation is found at asparagine 95, asparagine 107, asparagine 212, asparagine 296, asparagine 429, asparagine 521, asparagine 532, and asparagine 616. In terms of domain architecture, PA14 spans 109–253 (TLDKSSNIYS…SDYCGVCQGD (145 aa)). The chain crosses the membrane as a helical span at residues 645–665 (TSVIVGVSVAAAVVAIAIVVA). Topologically, residues 666–706 (SKKGYDAWAASNNNSLASLTSNPLYENPTGNGDNPMYQPNS) are cytoplasmic. Positions 687 to 706 (NPLYENPTGNGDNPMYQPNS) are disordered. Residues 693–706 (PTGNGDNPMYQPNS) are compositionally biased toward polar residues.

The protein belongs to the prespore-cell-inducing factor family.

The protein resides in the membrane. The polypeptide is Protein psiG (psiG-1) (Dictyostelium discoideum (Social amoeba)).